The sequence spans 174 residues: Urease accessory protein UreE (174 aa).

Positions 146–174 (NGAYATGGHAHDHDGEPEHVHGPGCQHAH) are disordered. Residues 154-166 (HAHDHDGEPEHVH) are compositionally biased toward basic and acidic residues.

This sequence belongs to the UreE family.

The protein resides in the cytoplasm. Involved in urease metallocenter assembly. Binds nickel. Probably functions as a nickel donor during metallocenter assembly. This Albidiferax ferrireducens (strain ATCC BAA-621 / DSM 15236 / T118) (Rhodoferax ferrireducens) protein is Urease accessory protein UreE.